Reading from the N-terminus, the 590-residue chain is Multidrug resistance ABC transporter ATP-binding and permease protein (590 aa).

Helical transmembrane passes span 35–55 (YLFFIIGILAGIVGTLIQLQV), 79–99 (IALYIGSAAVSAIAAIVLGIF), 150–170 (IPQAFTSILLLVGSIVFMLQM), 176–196 (LAMIIAVPVVMLIMFPIMTFG), 261–281 (VMMLSMMLMIFGLLAYGIYLI), and 292–312 (LGMMMYLMNLIGAVPTVATFF). One can recognise an ABC transmembrane type-1 domain in the interval 38 to 317 (FIIGILAGIV…VATFFTELAK (280 aa)). The ABC transporter domain occupies 349-584 (LSARHVDFAY…HPLYAKYVSE (236 aa)). 382 to 389 (GPSGGGKS) provides a ligand contact to ATP.

It belongs to the ABC transporter superfamily. Multidrug exporter LmrA (TC 3.A.1.117.1) family. Homodimer.

It localises to the cell membrane. The enzyme catalyses ATP + H2O + xenobioticSide 1 = ADP + phosphate + xenobioticSide 2.. Efflux transporter for a variety of amphiphilic cationic compounds, including antibiotics. The chain is Multidrug resistance ABC transporter ATP-binding and permease protein (lmrA) from Lactococcus lactis subsp. lactis (strain IL1403) (Streptococcus lactis).